A 148-amino-acid chain; its full sequence is Hemoglobin subunit beta-1 (148 aa).

The 146-residue stretch at 3–148 (EWTDAERTAI…VVSALCRQYH (146 aa)) folds into the Globin domain. 2 residues coordinate heme b: H64 and H93.

Heterotetramer of two alpha chains and two beta chains. In terms of tissue distribution, red blood cells.

Involved in oxygen transport from gills to the various peripheral tissues. This is Hemoglobin subunit beta-1 (ba1) from Danio rerio (Zebrafish).